A 507-amino-acid polypeptide reads, in one-letter code: Sugar transport protein 6 (507 aa).

At 1 to 20 the chain is on the cytoplasmic side; sequence MAVVVSNANAPAFEAKMTVY. 12 helical membrane passes run 21–41, 78–98, 115–135, 138–158, 165–185, 199–219, 280–300, 318–338, 345–365, 381–401, 418–438, and 447–467; these read VFICVMIAAVGGLIFGYDIGI, FLQLFTSSLYLAALVASFVAS, IFFLIGVGLTAGAVNLVMLII, LFLGFGVGFGNQAVPLFLSEI, GGLNIVFQLMVTIGILIANIV, IALGGAGIPAVILLFGSLLII, FIIGMLLQLFQQFTGINAIMF, LSAVITGSINVLATFVGIYLV, FLLLQSSVHMLICQLIIGIIL, LVVVIFVCVYVMGFAWSWGPL, GFAVAVSCNMFFTFVIAQAFL, and GIFFFFSGWIIVMGLFAFFFI. Topologically, residues 468 to 507 are cytoplasmic; that stretch reads PETKGIAIDDMRESVWKPHWFWKRYMLPEDDHHDIEKRNA.

Belongs to the major facilitator superfamily. Sugar transporter (TC 2.A.1.1) family. As to expression, pollen specific.

It is found in the membrane. Its activity is regulated as follows. Inhibited by uncouplers such as 2,4-dinitrophenol and carbonyl cyanide-m-chlorophenyl-hydrazone. Functionally, mediates an active uptake of hexoses, probably by sugar/hydrogen symport. Can transport glucose, 3-O-methylglucose, mannose, fructose and galactose, and, to a lower extent, xylose and ribulose. The protein is Sugar transport protein 6 (STP6) of Arabidopsis thaliana (Mouse-ear cress).